We begin with the raw amino-acid sequence, 186 residues long: ADP-ribosylation factor-like protein 8B-A (186 aa).

The note=Mediates targeting to membranes intramembrane region spans 1-19 (MLALINRLLDWFKSLFWKE). Residues 29 to 35 (QYSGKTT), 71 to 75 (DIGGQ), and 130 to 133 (NKRD) contribute to the GTP site.

This sequence belongs to the small GTPase superfamily. Arf family.

Its subcellular location is the late endosome membrane. The protein resides in the lysosome membrane. It is found in the cytoplasm. The protein localises to the cytoskeleton. It localises to the spindle. Its subcellular location is the early endosome membrane. Functionally, small GTPase which cycles between active GTP-bound and inactive GDP-bound states. In its active state, binds to a variety of effector proteins playing a key role in the regulation of lysosomal positioning which is important for nutrient sensing, natural killer cell-mediated cytotoxicity and antigen presentation. Along with its effectors, orchestrates lysosomal transport and fusion. This Danio rerio (Zebrafish) protein is ADP-ribosylation factor-like protein 8B-A (arl8ba).